The chain runs to 192 residues: Interleukin-18 (192 aa).

Positions 1-35 (MAAEPEDNCISFVEMKFINNTLYFVAENDEDLESD) are excised as a propeptide.

This sequence belongs to the IL-1 family. In terms of assembly, forms a ternary complex with ligand-binding receptor subunit IL18R1 and signaling receptor subunit IL18RAP at the plasma membrane. Mature IL18 first binds to IL18R1 forming a low affinity binary complex, which then interacts with IL18RAP to form a high affinity ternary complex that signals inside the cell. Interacts with cargo receptor TMED10; the interaction mediates the translocation from the cytoplasm into the ERGIC (endoplasmic reticulum-Golgi intermediate compartment) and thereby secretion. In terms of processing, the pro-IL-18 precursor is processed by CASP1, CASP4 or CASP5 to yield its mature, active form. The pro-IL-18 precursor features autoinhibitory interactions between the propeptide and the post-cleavage-site region, preventing recognition by the IL18R1 receptor. Processing by CASP1, CASP4 or CASP5 induces conformational changes to generate critical receptor-binding sites. The mature form is then secreted and released in the extracellular milieu by passing through the gasdermin-D (GSDMD) pore. In contrast, cleavage by CASP3 inactivates IL18.

The protein resides in the cytoplasm. Its subcellular location is the cytosol. It is found in the secreted. In terms of biological role, pro-inflammatory cytokine primarily involved in epithelial barrier repair, polarized T-helper 1 (Th1) cell and natural killer (NK) cell immune responses. Upon binding to IL18R1 and IL18RAP, forms a signaling ternary complex which activates NF-kappa-B, triggering synthesis of inflammatory mediators. Synergizes with IL12/interleukin-12 to induce IFNG synthesis from T-helper 1 (Th1) cells and natural killer (NK) cells. Involved in transduction of inflammation downstream of pyroptosis: its mature form is specifically released in the extracellular milieu by passing through the gasdermin-D (GSDMD) pore. The sequence is that of Interleukin-18 (IL18) from Sus scrofa (Pig).